An 89-amino-acid polypeptide reads, in one-letter code: Elongation factor 1-beta (89 aa).

It belongs to the EF-1-beta/EF-1-delta family.

Functionally, promotes the exchange of GDP for GTP in EF-1-alpha/GDP, thus allowing the regeneration of EF-1-alpha/GTP that could then be used to form the ternary complex EF-1-alpha/GTP/AAtRNA. This chain is Elongation factor 1-beta, found in Methanococcus aeolicus (strain ATCC BAA-1280 / DSM 17508 / OCM 812 / Nankai-3).